A 345-amino-acid chain; its full sequence is 4-hydroxyproline 2-epimerase 1 (345 aa).

Gln-85 serves as a coordination point for substrate. Catalysis depends on Ser-93, which acts as the Proton acceptor. Substrate is bound by residues 94–95 and Asp-251; that span reads GS. The active-site Proton donor is Cys-255. 256-257 lines the substrate pocket; sequence GT.

Belongs to the proline racemase family.

The catalysed reaction is trans-4-hydroxy-L-proline = cis-4-hydroxy-D-proline. Catalyzes the epimerization of trans-4-hydroxy-L-proline (t4LHyp) to cis-4-hydroxy-D-proline (c4DHyp). May be involved in a degradation pathway of t4LHyp. Can also catalyze the epimerization of trans-3-hydroxy-L-proline (t3LHyp) to cis-3-hydroxy-D-proline (c3DHyp) in vitro. Displays no proline racemase activity. The protein is 4-hydroxyproline 2-epimerase 1 of Rhizobium rhizogenes (strain K84 / ATCC BAA-868) (Agrobacterium radiobacter).